The sequence spans 898 residues: MFSQQQQQQLQQQQQQLQQLQQQQLQQQQLQQQQLLQLQQLLQQSPPQAPLPMAVSRGLPPQQPQQPLLNLQGTNSASLLNGSMLQRALLLQQLQGLDQFAMPPATYDTAGLTMPTATLGNLRGYGMASPGLAAPSLTPPQLATPNLQQFFPQATRQSLLGPPPVGVPMNPSQFNLSGRNPQKQARTSSSTTPNRKDSSSQTMPVEDKSDPPEGSEEAAEPRMDTPEDQDLPPCPEDIAKEKRTPAPEPEPCEASELPAKRLRSSEEPTEKEPPGQLQVKAQPQARMTVPKQTQTPDLLPEALEAQVLPRFQPRVLQVQAQVQSQTQPRIPSTDTQVQPKLQKQAQTQTSPEHLVLQQKQVQPQLQQEAEPQKQVQPQVQPQAHSQGPRQVQLQQEAEPLKQVQPQVQPQAHSQPPRQVQLQLQKQVQTQTYPQVHTQAQPSVQPQEHPPAQVSVQPPEQTHEQPHTQPQVSLLAPEQTPVVVHVCGLEMPPDAVEAGGGMEKTLPEPVGTQVSMEEIQNESACGLDVGECENRAREMPGVWGAGGSLKVTILQSSDSRAFSTVPLTPVPRPSDSVSSTPAATSTPSKQALQFFCYICKASCSSQQEFQDHMSEPQHQQRLGEIQHMSQACLLSLLPVPRDVLETEDEEPPPRRWCNTCQLYYMGDLIQHRRTQDHKIAKQSLRPFCTVCNRYFKTPRKFVEHVKSQGHKDKAKELKSLEKEIAGQDEDHFITVDAVGCFEGDEEEEEDDEDEEEIEVEEELCKQVRSRDISREEWKGSETYSPNTAYGVDFLVPVMGYICRICHKFYHSNSGAQLSHCKSLGHFENLQKYKAAKNPSPTTRPVSRRCAINARNALTALFTSSGRPPSQPNTQDKTPSKVTARPSQPPLPRRSTRLKT.

Disordered regions lie at residues 48-69, 157-305, and 318-471; these read QAPL…QPLL, QSLL…ALEA, and VQAQ…QPQV. The segment covering 170 to 203 has biased composition (polar residues); sequence NPSQFNLSGRNPQKQARTSSSTTPNRKDSSSQTM. Residue Ser209 is modified to Phosphoserine. Position 244 is a phosphothreonine (Thr244). Over residues 263-273 the composition is skewed to basic and acidic residues; it reads RSSEEPTEKEP. Lys280 is covalently cross-linked (Glycyl lysine isopeptide (Lys-Gly) (interchain with G-Cter in SUMO2)). The segment covering 318–327 has biased composition (low complexity); that stretch reads VQAQVQSQTQ. The span at 328-351 shows a compositional bias: polar residues; it reads PRIPSTDTQVQPKLQKQAQTQTSP. Residue Lys340 forms a Glycyl lysine isopeptide (Lys-Gly) (interchain with G-Cter in SUMO2) linkage. Ser350 bears the Phosphoserine mark. A compositionally biased stretch (low complexity) spans 355–383; it reads VLQQKQVQPQLQQEAEPQKQVQPQVQPQA. The span at 384 to 395 shows a compositional bias: polar residues; that stretch reads HSQGPRQVQLQQ. Lys401 participates in a covalent cross-link: Glycyl lysine isopeptide (Lys-Gly) (interchain with G-Cter in SUMO2). Residues 402-435 are compositionally biased toward low complexity; it reads QVQPQVQPQAHSQPPRQVQLQLQKQVQTQTYPQV. Residues 436–445 are compositionally biased toward polar residues; that stretch reads HTQAQPSVQP. Ser547 is subject to Phosphoserine. Lys549 participates in a covalent cross-link: Glycyl lysine isopeptide (Lys-Gly) (interchain with G-Cter in SUMO2). Positions 562–584 are disordered; it reads STVPLTPVPRPSDSVSSTPAATS. Thr567 bears the Phosphothreonine mark. A compositionally biased stretch (low complexity) spans 572-584; sequence PSDSVSSTPAATS. Glycyl lysine isopeptide (Lys-Gly) (interchain with G-Cter in SUMO2) cross-links involve residues Lys588, Lys680, and Lys705. Residues 799 to 830 form a Matrin-type zinc finger; sequence YICRICHKFYHSNSGAQLSHCKSLGHFENLQK. A Phosphoserine modification is found at Ser821. A Glycyl lysine isopeptide (Lys-Gly) (interchain with G-Cter in SUMO2) cross-link involves residue Lys830. The residue at position 838 (Ser838) is a Phosphoserine. The span at 859–879 shows a compositional bias: polar residues; that stretch reads LFTSSGRPPSQPNTQDKTPSK. Residues 859–898 form a disordered region; it reads LFTSSGRPPSQPNTQDKTPSKVTARPSQPPLPRRSTRLKT. Lys879 is covalently cross-linked (Glycyl lysine isopeptide (Lys-Gly) (interchain with G-Cter in SUMO2)).

In terms of assembly, interacts with CIP/WAF1.

The protein localises to the nucleus. Its function is as follows. May regulate the subcellular localization of CIP/WAF1. The protein is Cip1-interacting zinc finger protein (CIZ1) of Homo sapiens (Human).